A 106-amino-acid polypeptide reads, in one-letter code: Apovitellenin-1 (106 aa).

An N-terminal signal peptide occupies residues 1 to 24; the sequence is MVQYRALVIAVILLLSTTVPEVHS.

The protein belongs to the apovitellenin family. Homodimer; disulfide-linked. As to expression, produced by the liver, secreted into the blood and then sequestred by receptor mediated endocytosis into growing oocytes.

Its function is as follows. Protein component of the very low density lipoprotein (VLDL) of egg-laying females. Potent lipoprotein lipase inhibitor, preventing the loss of triglycerides from VLDL on their way from the liver to the growing oocytes. The chain is Apovitellenin-1 from Gallus gallus (Chicken).